Here is a 150-residue protein sequence, read N- to C-terminus: Small ribosomal subunit protein uS13 (150 aa).

Belongs to the universal ribosomal protein uS13 family. As to quaternary structure, part of the 30S ribosomal subunit. Forms a loose heterodimer with protein S19. Forms two bridges to the 50S subunit in the 70S ribosome.

In terms of biological role, located at the top of the head of the 30S subunit, it contacts several helices of the 16S rRNA. In the 70S ribosome it contacts the 23S rRNA (bridge B1a) and protein L5 of the 50S subunit (bridge B1b), connecting the 2 subunits; these bridges are implicated in subunit movement. The chain is Small ribosomal subunit protein uS13 from Aeropyrum pernix (strain ATCC 700893 / DSM 11879 / JCM 9820 / NBRC 100138 / K1).